The primary structure comprises 916 residues: DNA repair endonuclease XPF (916 aa).

Positions 1–457 (MESGQPARRI…EVWMKFRKED (457 aa)) are helicase-like. Leucine-zipper regions lie at residues 233–254 (LNACLKELKCHNPSLEVEDLSL) and 270–298 (LDPLWHQLGAKTKSLVQDLKILRTLLQYL). Lysine 289 is modified (N6-acetyllysine). A disordered region spans residues 460–487 (KRIRKSHKRPKDPQNKERASTKERTLKK). Positions 470-483 (KDPQNKERASTKER) are enriched in basic and acidic residues. Residues 486–491 (KKKKRK) carry the Nuclear localization signal motif. Lysine 500 participates in a covalent cross-link: Glycyl lysine isopeptide (Lys-Gly) (interchain with G-Cter in SUMO2). Disordered stretches follow at residues 502–526 (EELEEEGDVEEGYRREISSSPESCP) and 660–679 (TASADVSTDTRKAGGQEQNG). The residue at position 521 (serine 521) is a Phosphoserine. The tract at residues 658 to 813 (RGTASADVST…PSPHATAELF (156 aa)) is nuclease. The ERCC4 domain maps to 683–763 (SIVVDMREFR…RPVLLIEFDP (81 aa)). The residue at position 764 (serine 764) is a Phosphoserine. The hhH2, dimerization with ERCC1 stretch occupies residues 837-905 (TLPESEKYNP…QLYDFIHTSF (69 aa)). Lysine 911 bears the N6-acetyllysine mark.

Belongs to the XPF family. In terms of assembly, heterodimer composed of ERCC1 and ERCC4/XPF. Interacts with SLX4/BTBD12; this interaction is direct and links the ERCC1-ERCC4/XPF complex to SLX4, which may coordinate the action of the structure-specific endonuclease during DNA repair. Requires Mg(2+) as cofactor. Acetylation at Lys-911 by KAT5 promotes interaction with ERCC1 by disrupting a salt bridge between Glu-907 and Lys-911, thereby exposing a second binding site for ERCC1. Deacetylated by SIRT1.

It is found in the nucleus. The protein localises to the chromosome. Catalytic component of a structure-specific DNA repair endonuclease responsible for the 5-prime incision during DNA repair, and which is essential for nucleotide excision repair (NER) and interstrand cross-link (ICL) repair. The sequence is that of DNA repair endonuclease XPF from Homo sapiens (Human).